Reading from the N-terminus, the 243-residue chain is Pyridoxine 5'-phosphate synthase (243 aa).

N9 is a binding site for 3-amino-2-oxopropyl phosphate. 11–12 contacts 1-deoxy-D-xylulose 5-phosphate; it reads DH. R20 lines the 3-amino-2-oxopropyl phosphate pocket. Residue H45 is the Proton acceptor of the active site. Residues R47 and H52 each coordinate 1-deoxy-D-xylulose 5-phosphate. The active-site Proton acceptor is E72. T102 lines the 1-deoxy-D-xylulose 5-phosphate pocket. H193 serves as the catalytic Proton donor. 3-amino-2-oxopropyl phosphate is bound by residues G194 and 215-216; that span reads GH.

It belongs to the PNP synthase family. Homooctamer; tetramer of dimers.

It localises to the cytoplasm. The enzyme catalyses 3-amino-2-oxopropyl phosphate + 1-deoxy-D-xylulose 5-phosphate = pyridoxine 5'-phosphate + phosphate + 2 H2O + H(+). It participates in cofactor biosynthesis; pyridoxine 5'-phosphate biosynthesis; pyridoxine 5'-phosphate from D-erythrose 4-phosphate: step 5/5. In terms of biological role, catalyzes the complicated ring closure reaction between the two acyclic compounds 1-deoxy-D-xylulose-5-phosphate (DXP) and 3-amino-2-oxopropyl phosphate (1-amino-acetone-3-phosphate or AAP) to form pyridoxine 5'-phosphate (PNP) and inorganic phosphate. The polypeptide is Pyridoxine 5'-phosphate synthase (Vibrio cholerae serotype O1 (strain ATCC 39315 / El Tor Inaba N16961)).